The sequence spans 177 residues: Large ribosomal subunit protein uL6 (177 aa).

This sequence belongs to the universal ribosomal protein uL6 family. Part of the 50S ribosomal subunit.

Its function is as follows. This protein binds to the 23S rRNA, and is important in its secondary structure. It is located near the subunit interface in the base of the L7/L12 stalk, and near the tRNA binding site of the peptidyltransferase center. In Cupriavidus pinatubonensis (strain JMP 134 / LMG 1197) (Cupriavidus necator (strain JMP 134)), this protein is Large ribosomal subunit protein uL6.